The following is a 737-amino-acid chain: Transcription termination factor Rho (737 aa).

Residues 1-396 (MSGPCSAHRV…ENSYLPDPTD (396 aa)) are disordered. 3 stretches are compositionally biased toward low complexity: residues 16–28 (RPTI…TRSS), 62–86 (ASRA…GSDA), and 101–111 (DAESAPTAADT). Composition is skewed to basic and acidic residues over residues 145 to 175 (PRAE…HESR), 196 to 256 (SMER…DRRD), 266 to 279 (GRPD…DRHQ), and 286 to 324 (DRSH…DRGG). Over residues 328–339 (RNGRRGRNRFRR) the composition is skewed to basic residues. The segment covering 347–360 (APISGSHAPSQGSP) has biased composition (polar residues). The Rho RNA-BD domain occupies 367-439 (EGTMAGWFDP…IEVQTLNDGS (73 aa)). Basic and acidic residues predominate over residues 376–387 (PSRDGGFLRRPE). Residues 487–492 (GYGQRA), 499–504 (RAGKTT), and arginine 530 each bind ATP.

The protein belongs to the Rho family. As to quaternary structure, homohexamer. The homohexamer assembles into an open ring structure.

Its function is as follows. Facilitates transcription termination by a mechanism that involves Rho binding to the nascent RNA, activation of Rho's RNA-dependent ATPase activity, and release of the mRNA from the DNA template. The polypeptide is Transcription termination factor Rho (Gemmatimonas aurantiaca (strain DSM 14586 / JCM 11422 / NBRC 100505 / T-27)).